The sequence spans 3677 residues: Dystrophin (3677 aa).

Residues 1 to 240 form an actin-binding region; the sequence is MLWWEEVEDC…YITSLFQVLP (240 aa). Calponin-homology (CH) domains are found at residues 15-119 and 134-240; these read DVQK…LHWQ and TNSE…QVLP. Positions 63 to 72 are ANK2- and ANK-3 binding; that stretch reads PKEKGSTRVH. Spectrin repeat units follow at residues 342–447, 451–557, 560–668, 728–828, 831–935, 944–1046, 1049–1154, 1163–1264, 1268–1464, 1469–1569, 1573–1676, 1680–1777, 1779–1875, 1878–1980, 2001–2098, 2106–2209, 2215–2316, 2317–2415, 2465–2569, 2576–2678, 2682–2786, 2800–2922, and 2927–3032; these read LDSY…SNLH, MDLQ…LLQD, LKWQ…QISQ, DITE…NWLE, NNII…ELQT, RYQE…KLEE, NKLR…EALK, LQKD…TLEE, CWHE…LFQK, EQRL…QLEK, LSRK…NLLL, KHME…TGKA, IPLK…KALE, HQWY…TLHE, YLTE…ERQG, KWRH…RVEE, SEFQ…GELE, VHIK…LRTK, ADFN…QLNE, QWLE…ALEE, LLQQ…KKSL, KRLH…RKID, and RLQE…QLHE. Residues 1416-1914 are interaction with SYNM; sequence SDLTSHEISL…PEPRDERKIK (499 aa). Positions 3047-3080 constitute a WW domain; that stretch reads TSVQGPWERAISPNKVPYYINHETQTTCWDHPKM. The segment at 3050–3400 is interaction with SYNM; that stretch reads QGPWERAISP…TVLEGDNMET (351 aa). The ZZ-type; degenerate zinc finger occupies 3300–3356; sequence KHQAKCNICKECPIIGFRYRSLKHFNYDICQSCFFSGRVAKGHKMHYPMVEYCTPTT. 4 residues coordinate Zn(2+): cysteine 3305, cysteine 3308, cysteine 3329, and cysteine 3332. Residues 3458 to 3510 are binds to SNTB1; sequence DDEHLLIQHYCQSLNQDSPLSQPRSPAQILISLESEERGELERILADLEEENR. Serine 3475, serine 3482, and serine 3492 each carry phosphoserine. Disordered regions lie at residues 3520–3546 and 3595–3677; these read KQQH…QSPR and EAKV…EDTM. Polar residues-rich tracts occupy residues 3599-3618 and 3654-3664; these read NGTT…SSQP and QLNNSFPSSRG. Phosphoserine is present on residues serine 3604, serine 3605, serine 3609, serine 3615, serine 3616, and serine 3658.

In terms of assembly, interacts with SYNM. Interacts with the syntrophins SNTG1 and SNTG2. Interacts with KRT19. Component of the dystrophin-associated glycoprotein complex which is composed of three subcomplexes: a cytoplasmic complex comprised of DMD (or UTRN), DTNA and a number of syntrophins, such as SNTB1, SNTB2, SNTG1 and SNTG2, the transmembrane dystroglycan complex, and the sarcoglycan-sarcospan complex. Interacts with DAG1 (betaDAG1) with DMD; the interaction is inhibited by phosphorylation on the PPXY motif of DAG1. Interacts with SYNM; SNTA1 and SNTB1. Interacts with CMYA5. Directly interacts with ANK2 and ANK3; these interactions do not interfere with betaDAG1-binding and are necessary for proper localization in muscle cells. Identified in a dystroglycan complex that contains at least PRX, DRP2, UTRN, DMD and DAG1. Interacts with DTNB. Interacts with PGM5; the interaction is direct. Interacts with NOS1; localizes NOS1 to sarcolemma in muscle cells. As to expression, strongly expressed in skeletal muscle and weak expression observed in newborn brain which increases in adult brain.

It localises to the cell membrane. Its subcellular location is the sarcolemma. The protein resides in the cytoplasm. It is found in the cytoskeleton. The protein localises to the postsynaptic cell membrane. Its function is as follows. Anchors the extracellular matrix to the cytoskeleton via F-actin. Ligand for dystroglycan. Component of the dystrophin-associated glycoprotein complex which accumulates at the neuromuscular junction (NMJ) and at a variety of synapses in the peripheral and central nervous systems and has a structural function in stabilizing the sarcolemma. Also implicated in signaling events and synaptic transmission. The sequence is that of Dystrophin (Dmd) from Rattus norvegicus (Rat).